Reading from the N-terminus, the 119-residue chain is Large ribosomal subunit protein uL22 (119 aa).

This sequence belongs to the universal ribosomal protein uL22 family. In terms of assembly, part of the 50S ribosomal subunit.

This protein binds specifically to 23S rRNA; its binding is stimulated by other ribosomal proteins, e.g. L4, L17, and L20. It is important during the early stages of 50S assembly. It makes multiple contacts with different domains of the 23S rRNA in the assembled 50S subunit and ribosome. In terms of biological role, the globular domain of the protein is located near the polypeptide exit tunnel on the outside of the subunit, while an extended beta-hairpin is found that lines the wall of the exit tunnel in the center of the 70S ribosome. The chain is Large ribosomal subunit protein uL22 from Tropheryma whipplei (strain TW08/27) (Whipple's bacillus).